We begin with the raw amino-acid sequence, 293 residues long: Formamidopyrimidine-DNA glycosylase (293 aa).

Residue P2 is the Schiff-base intermediate with DNA of the active site. E3 acts as the Proton donor in catalysis. The Proton donor; for beta-elimination activity role is filled by K60. H110, R129, and R174 together coordinate DNA. The segment at 259-293 (NVYRRTGKECRKCGNLIEKQKIAGRSTHWCPNCQK) adopts an FPG-type zinc-finger fold. Catalysis depends on R283, which acts as the Proton donor; for delta-elimination activity.

Belongs to the FPG family. As to quaternary structure, monomer. Zn(2+) is required as a cofactor.

The enzyme catalyses Hydrolysis of DNA containing ring-opened 7-methylguanine residues, releasing 2,6-diamino-4-hydroxy-5-(N-methyl)formamidopyrimidine.. It carries out the reaction 2'-deoxyribonucleotide-(2'-deoxyribose 5'-phosphate)-2'-deoxyribonucleotide-DNA = a 3'-end 2'-deoxyribonucleotide-(2,3-dehydro-2,3-deoxyribose 5'-phosphate)-DNA + a 5'-end 5'-phospho-2'-deoxyribonucleoside-DNA + H(+). Involved in base excision repair of DNA damaged by oxidation or by mutagenic agents. Acts as a DNA glycosylase that recognizes and removes damaged bases. Has a preference for oxidized purines, such as 7,8-dihydro-8-oxoguanine (8-oxoG). Has AP (apurinic/apyrimidinic) lyase activity and introduces nicks in the DNA strand. Cleaves the DNA backbone by beta-delta elimination to generate a single-strand break at the site of the removed base with both 3'- and 5'-phosphates. This chain is Formamidopyrimidine-DNA glycosylase, found in Prochlorococcus marinus (strain MIT 9312).